Consider the following 282-residue polypeptide: Bifunctional protein FolD (282 aa).

Residues 164-166 (GRS) and S189 each bind NADP(+).

Belongs to the tetrahydrofolate dehydrogenase/cyclohydrolase family. Homodimer.

The enzyme catalyses (6R)-5,10-methylene-5,6,7,8-tetrahydrofolate + NADP(+) = (6R)-5,10-methenyltetrahydrofolate + NADPH. The catalysed reaction is (6R)-5,10-methenyltetrahydrofolate + H2O = (6R)-10-formyltetrahydrofolate + H(+). Its pathway is one-carbon metabolism; tetrahydrofolate interconversion. Catalyzes the oxidation of 5,10-methylenetetrahydrofolate to 5,10-methenyltetrahydrofolate and then the hydrolysis of 5,10-methenyltetrahydrofolate to 10-formyltetrahydrofolate. The protein is Bifunctional protein FolD of Lactobacillus helveticus (strain DPC 4571).